The sequence spans 264 residues: Hemin import ATP-binding protein HmuV (264 aa).

An ABC transporter domain is found at Ile2–Ser242. ATP is bound at residue Gly34 to Ser41.

The protein belongs to the ABC transporter superfamily. Heme (hemin) importer (TC 3.A.1.14.5) family. The complex is composed of two ATP-binding proteins (HmuV), two transmembrane proteins (HmuU) and a solute-binding protein (HmuT).

It is found in the cell inner membrane. Its function is as follows. Part of the ABC transporter complex HmuTUV involved in hemin import. Responsible for energy coupling to the transport system. This chain is Hemin import ATP-binding protein HmuV, found in Bartonella quintana (strain Toulouse) (Rochalimaea quintana).